The chain runs to 178 residues: MSEVSCKKRDDYLEWPEYFMAVAFLSAQRSKDPNSQVGACIVNSENKIVGIGYNGMPNGCSDDQLPWRRTAKNKLDTKYPYVCHAELNAIMNKNSTDVKGCSMYVALFPCNECAKLIIQAGIKEVIFMSDKYHDSDEATAARLLFDMAGVTFRKFIPKCSKIVIDFDSINSRPSQKLQ.

Residues 14–146 form the CMP/dCMP-type deaminase domain; it reads EWPEYFMAVA…EATAARLLFD (133 aa). Histidine 84 lines the Zn(2+) pocket. Glutamate 86 acts as the Proton donor in catalysis. 2 residues coordinate Zn(2+): cysteine 110 and cysteine 113. At serine 174 the chain carries Phosphoserine.

It belongs to the cytidine and deoxycytidylate deaminase family. In terms of assembly, homohexamer. It depends on Zn(2+) as a cofactor.

The catalysed reaction is dCMP + H2O + H(+) = dUMP + NH4(+). It carries out the reaction 5-hydroxymethyl-dCMP + H2O + H(+) = 5-hydroxymethyl-dUMP + NH4(+). Its activity is regulated as follows. Allosteric enzyme whose activity is greatly influenced by the end products of its metabolic pathway, dCTP and dTTP. Its function is as follows. Catalyzes the deamination of dCMP to dUMP, providing the nucleoside monophosphate substrate for the thymidylate synthase/TYMS. Also, part of a nucleotide salvage pathway that eliminates epigenetically modified 5-hydroxymethyl-dCMP (hmdCMP) in a two-step process entailing deamination to cytotoxic 5-hydroxymethyl-dUMP (hmdUMP), followed by its hydrolysis into 5-hydroxymethyluracil (hmU) and 2-deoxy-D-ribose 5-phosphate (deoxyribosephosphate). Catalyzes the first step in that pathway, the deamination of 5-hydroxymethyl-dCMP (hmdCMP). The chain is Deoxycytidylate deaminase from Pongo abelii (Sumatran orangutan).